We begin with the raw amino-acid sequence, 151 residues long: Ribosome maturation factor RimP (151 aa).

This sequence belongs to the RimP family.

The protein resides in the cytoplasm. In terms of biological role, required for maturation of 30S ribosomal subunits. The protein is Ribosome maturation factor RimP of Halorhodospira halophila (strain DSM 244 / SL1) (Ectothiorhodospira halophila (strain DSM 244 / SL1)).